Consider the following 221-residue polypeptide: Cytidylate kinase 1 (221 aa).

Residue 7–15 participates in ATP binding; it reads GPSASGKSS.

This sequence belongs to the cytidylate kinase family. Type 1 subfamily.

It is found in the cytoplasm. The enzyme catalyses CMP + ATP = CDP + ADP. It catalyses the reaction dCMP + ATP = dCDP + ADP. The chain is Cytidylate kinase 1 from Borreliella afzelii (strain PKo) (Borrelia afzelii).